Here is a 299-residue protein sequence, read N- to C-terminus: Prohibitin-2 (299 aa).

A2 is subject to N-acetylalanine. Positions 19-49 (MGTALKLLLGAGAVAYGVRESVFTVEGGHRA) are necessary for transcriptional repression. Y128 is subject to Phosphotyrosine. The residue at position 147 (K147) is an N6-acetyllysine. Positions 150–174 (ASQLITQRAQVSLLIRRELTERAKD) are necessary for transcriptional repression. Phosphoserine is present on S151. Residues 190 to 238 (SREYTAAVEAKQVAQQEAQRAQFLVEKAKQEQRQKIVQAEGEAEAAKML) adopt a coiled-coil conformation. K200, K236, K250, and K262 each carry N6-acetyllysine.

The protein belongs to the prohibitin family. In terms of assembly, the mitochondrial prohibitin complex consists of two subunits (PHB1 and PHB2), assembled into a membrane-associated ring-shaped supercomplex of approximately 1 mDa. Interacts with ESR1, HDAC1 and HDAC5. Interacts with ZNF703. Interacts with STOML2. Interacts with ARFGEF3. Interacts with SPHK2. Interacts with COX4I1; the interaction associates PHB2 with COX. Interacts with MAP1LC3B (membrane-bound form LC3-II); the interaction is direct and upon mitochondrial depolarization and proteasome-dependent outer membrane rupture. Interacts with IGFBP6 (via C-terminal domain). Interacts with CLPB. Interacts with CD86 (via cytoplasmic domain); the interactions increases after priming with CD40. Interacts with AFG3L2. Interacts with DNAJC19. Interacts with AKT2; this interaction may be important for myogenic differentiation. Post-translationally, phosphorylated. Tyrosine phosphorylation is indirectly stimulated by IGFBP6.

The protein resides in the mitochondrion inner membrane. The protein localises to the cytoplasm. It is found in the nucleus. It localises to the cell membrane. Functionally, protein with pleiotropic attributes mediated in a cell-compartment- and tissue-specific manner, which include the plasma membrane-associated cell signaling functions, mitochondrial chaperone, and transcriptional co-regulator of transcription factors and sex steroid hormones in the nucleus. In the mitochondria, together with PHB, forms large ring complexes (prohibitin complexes) in the inner mitochondrial membrane (IMM) and functions as a chaperone protein that stabilizes mitochondrial respiratory enzymes and maintains mitochondrial integrity in the IMM, which is required for mitochondrial morphogenesis, neuronal survival, and normal lifespan. The prohibitin complex, with DNAJC19, regulates cardiolipin remodeling and the protein turnover of OMA1 in a cardiolipin-binding manner. Also regulates cytochrome-c oxidase assembly (COX) and mitochondrial respiration. Binding to sphingoid 1-phosphate (SPP) modulates its regulator activity. Has a key role of mitophagy receptor involved in targeting mitochondria for autophagic degradation. Involved in mitochondrial-mediated antiviral innate immunity, activates RIG-I-mediated signal transduction and production of IFNB1 and pro-inflammatory cytokine IL6. In terms of biological role, in the nucleus, serves as transcriptional co-regulator. Acts as a mediator of transcriptional repression by nuclear hormone receptors via recruitment of histone deacetylases. Functions as an estrogen receptor (ER)-selective coregulator that potentiates the inhibitory activities of antiestrogens and represses the activity of estrogens. Competes with NCOA1 for modulation of ER transcriptional activity. Its function is as follows. In the plasma membrane, is involved in IGFBP6-induced cell migration. Cooperates with CD86 to mediate CD86-signaling in B lymphocytes that regulates the level of IgG1 produced through the activation of distal signaling intermediates. Upon CD40 engagement, required to activate NF-kappa-B signaling pathway via phospholipase C and protein kinase C activation. The polypeptide is Prohibitin-2 (PHB2) (Pongo abelii (Sumatran orangutan)).